Reading from the N-terminus, the 354-residue chain is Holliday junction branch migration complex subunit RuvB (354 aa).

Residues 1–24 (MSIQTDDFAPVPPPKRVVSAAPTS) form a disordered region. The interval 5 to 195 (TDDFAPVPPP…FGIVARLEFY (191 aa)) is large ATPase domain (RuvB-L). ATP is bound by residues Leu-34, Arg-35, Gly-76, Lys-79, Thr-80, Thr-81, 142-144 (EDY), Arg-185, Tyr-195, and Arg-232. Thr-80 serves as a coordination point for Mg(2+). The tract at residues 196–266 (TPEELSRIVT…IAQRALAMLD (71 aa)) is small ATPAse domain (RuvB-S). The tract at residues 269–354 (PQGFDVMDRK…RQHTDLFGPA (86 aa)) is head domain (RuvB-H). Arg-324 and Arg-329 together coordinate DNA.

The protein belongs to the RuvB family. As to quaternary structure, homohexamer. Forms an RuvA(8)-RuvB(12)-Holliday junction (HJ) complex. HJ DNA is sandwiched between 2 RuvA tetramers; dsDNA enters through RuvA and exits via RuvB. An RuvB hexamer assembles on each DNA strand where it exits the tetramer. Each RuvB hexamer is contacted by two RuvA subunits (via domain III) on 2 adjacent RuvB subunits; this complex drives branch migration. In the full resolvosome a probable DNA-RuvA(4)-RuvB(12)-RuvC(2) complex forms which resolves the HJ.

It localises to the cytoplasm. It catalyses the reaction ATP + H2O = ADP + phosphate + H(+). Functionally, the RuvA-RuvB-RuvC complex processes Holliday junction (HJ) DNA during genetic recombination and DNA repair, while the RuvA-RuvB complex plays an important role in the rescue of blocked DNA replication forks via replication fork reversal (RFR). RuvA specifically binds to HJ cruciform DNA, conferring on it an open structure. The RuvB hexamer acts as an ATP-dependent pump, pulling dsDNA into and through the RuvAB complex. RuvB forms 2 homohexamers on either side of HJ DNA bound by 1 or 2 RuvA tetramers; 4 subunits per hexamer contact DNA at a time. Coordinated motions by a converter formed by DNA-disengaged RuvB subunits stimulates ATP hydrolysis and nucleotide exchange. Immobilization of the converter enables RuvB to convert the ATP-contained energy into a lever motion, pulling 2 nucleotides of DNA out of the RuvA tetramer per ATP hydrolyzed, thus driving DNA branch migration. The RuvB motors rotate together with the DNA substrate, which together with the progressing nucleotide cycle form the mechanistic basis for DNA recombination by continuous HJ branch migration. Branch migration allows RuvC to scan DNA until it finds its consensus sequence, where it cleaves and resolves cruciform DNA. The protein is Holliday junction branch migration complex subunit RuvB of Paracidovorax citrulli (strain AAC00-1) (Acidovorax citrulli).